Here is a 167-residue protein sequence, read N- to C-terminus: Putative pre-16S rRNA nuclease (167 aa).

Residues methionine 1–arginine 24 form a disordered region. A compositionally biased stretch (basic and acidic residues) spans arginine 7–arginine 21.

The protein belongs to the YqgF nuclease family.

The protein localises to the cytoplasm. Could be a nuclease involved in processing of the 5'-end of pre-16S rRNA. The polypeptide is Putative pre-16S rRNA nuclease (Mycolicibacterium paratuberculosis (strain ATCC BAA-968 / K-10) (Mycobacterium paratuberculosis)).